The chain runs to 490 residues: Pentatricopeptide repeat-containing protein At2g20710, mitochondrial (490 aa).

Residues 1 to 86 (MKHLLLLRLV…IKMLRKFSRF (86 aa)) constitute a mitochondrion transit peptide. 8 PPR repeats span residues 138–172 (NYHLYGALLNCYASKKVLHKAEQVFQEMKELGFLK), 173–207 (GCLPYNVMLNLYVRTGKYTMVEKLLREMEDETVKP), 208–243 (DIFTVNTRLHAYSVVSDVEGMEKFLMRCEADQGLHL), 244–274 (DWRTYADTANGYIKAGLTEKALEMLRKSEQM), 280–310 (RKHAYEVLMSFYGAAGKKEEVYRLWSLYKEL), 314–344 (YNTGYISVISALLKMDDIEEVEKIMEEWEAG), 349–379 (DIRIPHLLITGYCKKGMMEKAEEVVNILVQK), and 384–421 (DTSTWERLALGYKMAGKMEKAVEKWKRAIEVSKPGWRP).

It belongs to the PPR family. P subfamily.

Its subcellular location is the mitochondrion. In Arabidopsis thaliana (Mouse-ear cress), this protein is Pentatricopeptide repeat-containing protein At2g20710, mitochondrial.